The sequence spans 431 residues: Indole diterpene prenyltransferase nodD1 (431 aa).

An L-tryptophan-binding site is contributed by 85-86; the sequence is FI. Residues Arg107, Lys194, Arg268, Lys270, Tyr272, and Tyr353 each contribute to the substrate site.

This sequence belongs to the tryptophan dimethylallyltransferase family.

It functions in the pathway secondary metabolite biosynthesis. Indole diterpene prenyltransferase; part of the gene cluster that mediates the biosynthesis of the indole diterpenes nodulisporic acids (NA). Nodulisporic acid A (NAA) and its chemically modified derivatives are of particular significance because of their highly potent insecticidal activity against blood-feeding arthropods and lack of observable adverse effects on mammals, in particular the tremogenicity associated with the paspaline-derived IDTs is not observed. The geranylgeranyl diphosphate (GGPP) synthase ggs1, localized outside of the cluster, is proposed to catalyze the first step in nodulisporic acid biosynthesis via conversion of farnesyl pyrophosphate and isopentyl pyrophosphate into geranylgeranyl pyrophosphate (GGPP). Condensation of indole-3-glycerol phosphate with GGPP by the prenyl transferase nodC then forms 3-geranylgeranylindole (3-GGI). Epoxidation by the FAD-dependent monooxygenase nodM leads to a single-epoxidized-GGI that is substrate of the terpene cyclase nodB for cyclization to yield emindole SB. The terminal methyl carbon, C28, of emindole SB is then oxidized by the cytochrome P450 monooxygenase nodW to produce nodulisporic acid F (NAF), the pentacyclic core of NAA. NAF is converted to nodulisporic acid E (NAE) via prenylation. This step is probably performed by one of the indole diterpene prenyltransferases nodD1 or nodD2. Several oxidation steps performed by the FAD-linked oxidoreductase nodO and one of the cytochrome P450 monooxygenase nodR, nodX or nodZ further convert NAE to nodulisporic acid D (NAD). NAD is substrate of cytochrome P450 monooxygenase nodJ to produce the precursor of nodulisporic acid C (NAC), converted to NAC by one of the indole diterpene prenyltransferases nodD1 or nodD2. The FAD-dependent monooxygenase nodY2 then oxidizes NAC to nodulisporic acid B (NAB). Finally NAB is converted to NAA by one of the cytochrome P450 monooxygenases nodR, nodX or nodZ. The chain is Indole diterpene prenyltransferase nodD1 from Hypoxylon pulicicidum.